The following is a 1938-amino-acid chain: Myosin-6 (1938 aa).

One can recognise a Myosin N-terminal SH3-like domain in the interval 32-81 (DIRTECFVPDDKEEYVKAKVVSREGGKVTAETENGKTVTIKEDQVMQQNP). Residues 85-780 (DKIEDMAMLT…LLGLLEEMRD (696 aa)) form the Myosin motor domain. Position 129 is an N6,N6,N6-trimethyllysine (lysine 129). 178-185 (GESGAGKT) serves as a coordination point for ATP. Threonine 379 carries the phosphothreonine modification. Residue serine 417 is modified to Phosphoserine. Actin-binding stretches follow at residues 657 to 679 (LNKL…IPNE) and 759 to 773 (KFGH…GLLG). The IQ domain occupies 783 to 812 (LSRIITRIQAQARGQLMRIEFKKIVERRDA). Calmodulin-binding regions lie at residues 790-807 (IQAQ…KKIV) and 816-833 (IQWN…PWMK). Residues 842-1938 (LKSAETEKEM…IGAKKMHDEE (1097 aa)) are a coiled coil. Phosphoserine is present on residues serine 1090 and serine 1139. Tyrosine 1261 carries the post-translational modification Phosphotyrosine. Serine 1271 is subject to Phosphoserine. 2 positions are modified to phosphothreonine: threonine 1277 and threonine 1284. Serine 1309 is subject to Phosphoserine. The residue at position 1310 (tyrosine 1310) is a Phosphotyrosine. Threonine 1311 carries the post-translational modification Phosphothreonine. Serine 1512 is modified (phosphoserine). The residue at position 1515 (threonine 1515) is a Phosphothreonine. A disordered region spans residues 1909 to 1938 (EERADIAESQVNKLRAKSRDIGAKKMHDEE). The segment covering 1925-1938 (KSRDIGAKKMHDEE) has biased composition (basic and acidic residues).

This sequence belongs to the TRAFAC class myosin-kinesin ATPase superfamily. Myosin family. In terms of assembly, muscle myosin is a hexameric protein that consists of 2 heavy chain subunits (MHC), 2 alkali light chain subunits (MLC) and 2 regulatory light chain subunits (MLC-2).

Its subcellular location is the cytoplasm. It is found in the myofibril. Its function is as follows. Muscle contraction. In Mus musculus (Mouse), this protein is Myosin-6 (Myh6).